The primary structure comprises 89 residues: Small ribosomal subunit protein bS20 (89 aa).

Residues 1-10 (MKNRSAIKRH) show a composition bias toward basic residues. The segment at 1-30 (MKNRSAIKRHNQSEVRRMRNRSAKSEVRTT) is disordered. Positions 11–30 (NQSEVRRMRNRSAKSEVRTT) are enriched in basic and acidic residues.

Belongs to the bacterial ribosomal protein bS20 family.

Binds directly to 16S ribosomal RNA. In Treponema denticola (strain ATCC 35405 / DSM 14222 / CIP 103919 / JCM 8153 / KCTC 15104), this protein is Small ribosomal subunit protein bS20.